Here is a 648-residue protein sequence, read N- to C-terminus: Macrolide export ATP-binding/permease protein MacB (648 aa).

Residues 5-243 form the ABC transporter domain; the sequence is LELCNVSRSY…QGVDAAVVNT (239 aa). 41-48 lines the ATP pocket; sequence GVSGSGKS. 5 consecutive transmembrane segments (helical) span residues 273-293, 417-437, 523-543, 578-598, and 611-631; these read LLTMLGIIIGIASVVSIVVVG, ANVVGEVVLVGNMPVIVIGVA, LFLTLVAVISLVVGGIGVMNI, LVCLVGGALGISLSMFIAFML, and LTALASAFLCSTFTGILFGWL.

This sequence belongs to the ABC transporter superfamily. Macrolide exporter (TC 3.A.1.122) family. In terms of assembly, homodimer. Part of the tripartite efflux system MacAB-TolC, which is composed of an inner membrane transporter, MacB, a periplasmic membrane fusion protein, MacA, and an outer membrane component, TolC. The complex forms a large protein conduit and can translocate molecules across both the inner and outer membranes. Interacts with MacA.

Its subcellular location is the cell inner membrane. Its function is as follows. Part of the tripartite efflux system MacAB-TolC. MacB is a non-canonical ABC transporter that contains transmembrane domains (TMD), which form a pore in the inner membrane, and an ATP-binding domain (NBD), which is responsible for energy generation. Confers resistance against macrolides. The protein is Macrolide export ATP-binding/permease protein MacB of Salmonella paratyphi A (strain ATCC 9150 / SARB42).